Reading from the N-terminus, the 506-residue chain is Dolabradiene monooxygenase (506 aa).

Residues 5–25 form a helical membrane-spanning segment; that stretch reads VLLAVAMVALIAVLSKLKSLL. Cys443 is a binding site for heme.

This sequence belongs to the cytochrome P450 family. Requires heme as cofactor.

The protein localises to the membrane. The enzyme catalyses dolabradiene + reduced [NADPH--hemoprotein reductase] + O2 = 15,16-epoxydolabrene + oxidized [NADPH--hemoprotein reductase] + H2O + H(+). It catalyses the reaction 15,16-epoxydolabrene + reduced [NADPH--hemoprotein reductase] + O2 = 3beta-hydroxy-15,16-epoxydolabrene + oxidized [NADPH--hemoprotein reductase] + H2O + H(+). Involved in the production of antifungal dolabralexin phytoalexins in response to biotic and abiotic stresses. Catalyzes the epoxidation of dolabradiene at C-16, followed by hydroxylation at C-3, to yield the epoxides 15,16-epoxydolabrene (epoxydolabrene) and 3b-hydroxy-15,16-epoxydolabrene (epoxydolabranol). The protein is Dolabradiene monooxygenase of Zea mays (Maize).